The following is a 394-amino-acid chain: NAD(P)H-quinone oxidoreductase subunit H (394 aa).

It belongs to the complex I 49 kDa subunit family. NDH-1 can be composed of about 15 different subunits; different subcomplexes with different compositions have been identified which probably have different functions.

It is found in the cellular thylakoid membrane. The enzyme catalyses a plastoquinone + NADH + (n+1) H(+)(in) = a plastoquinol + NAD(+) + n H(+)(out). It carries out the reaction a plastoquinone + NADPH + (n+1) H(+)(in) = a plastoquinol + NADP(+) + n H(+)(out). Its function is as follows. NDH-1 shuttles electrons from an unknown electron donor, via FMN and iron-sulfur (Fe-S) centers, to quinones in the respiratory and/or the photosynthetic chain. The immediate electron acceptor for the enzyme in this species is believed to be plastoquinone. Couples the redox reaction to proton translocation, and thus conserves the redox energy in a proton gradient. Cyanobacterial NDH-1 also plays a role in inorganic carbon-concentration. The polypeptide is NAD(P)H-quinone oxidoreductase subunit H (Prochlorococcus marinus (strain SARG / CCMP1375 / SS120)).